A 531-amino-acid polypeptide reads, in one-letter code: 4-hydroxyphenylacetaldehyde oxime monooxygenase (531 aa).

A helical transmembrane segment spans residues 18-38 (WQTCLLVLLPVLLVSYYLLTS). Residues arginine 122, arginine 151, arginine 466, and cysteine 468 each coordinate heme b.

This sequence belongs to the cytochrome P450 family. Heme b is required as a cofactor.

The protein resides in the endoplasmic reticulum membrane. The catalysed reaction is (E)-4-hydroxyphenylacetaldehyde oxime + reduced [NADPH--hemoprotein reductase] + O2 = (S)-4-hydroxymandelonitrile + oxidized [NADPH--hemoprotein reductase] + 2 H2O + H(+). It catalyses the reaction (E)-4-hydroxyphenylacetaldehyde oxime = (Z)-(4-hydroxyphenyl)acetaldehyde oxime. The enzyme catalyses (Z)-(4-hydroxyphenyl)acetaldehyde oxime = 4-hydroxyphenylacetonitrile + H2O. It carries out the reaction 4-hydroxyphenylacetonitrile + reduced [NADPH--hemoprotein reductase] + O2 = (S)-4-hydroxymandelonitrile + oxidized [NADPH--hemoprotein reductase] + H2O + H(+). It functions in the pathway secondary metabolite biosynthesis; dhurrin biosynthesis; dhurrin from L-tyrosine: step 2/3. In terms of biological role, cytochrome P450 involved in the biosynthesis of the cyanogenic glucoside dhurrin. Catalyzes the conversion of p-hydroxyphenylacetaldoxime to p-hydroxymandelonitrile via three different and successive activities: isomerization of the (E) isomer to the (Z) isomer of p-hydroxyphenylacetaldoxime, followed by dehydration of the oxime to the corresponding nitrile, and C-hydroxylation of the nitrile to produce p-hydroxymandelonitrile. The sequence is that of 4-hydroxyphenylacetaldehyde oxime monooxygenase from Sorghum bicolor (Sorghum).